The chain runs to 316 residues: 4-hydroxy-3-methylbut-2-enyl diphosphate reductase (316 aa).

Cys-12 serves as a coordination point for [4Fe-4S] cluster. (2E)-4-hydroxy-3-methylbut-2-enyl diphosphate contacts are provided by His-41 and His-74. Positions 41 and 74 each coordinate dimethylallyl diphosphate. The isopentenyl diphosphate site is built by His-41 and His-74. Cys-96 contributes to the [4Fe-4S] cluster binding site. Position 124 (His-124) interacts with (2E)-4-hydroxy-3-methylbut-2-enyl diphosphate. A dimethylallyl diphosphate-binding site is contributed by His-124. His-124 serves as a coordination point for isopentenyl diphosphate. Glu-126 (proton donor) is an active-site residue. Thr-169 lines the (2E)-4-hydroxy-3-methylbut-2-enyl diphosphate pocket. A [4Fe-4S] cluster-binding site is contributed by Cys-199. Residues Ser-227, Ser-228, Asn-229, and Ser-271 each contribute to the (2E)-4-hydroxy-3-methylbut-2-enyl diphosphate site. Dimethylallyl diphosphate is bound by residues Ser-227, Ser-228, Asn-229, and Ser-271. Positions 227, 228, 229, and 271 each coordinate isopentenyl diphosphate.

The protein belongs to the IspH family. [4Fe-4S] cluster serves as cofactor.

It carries out the reaction isopentenyl diphosphate + 2 oxidized [2Fe-2S]-[ferredoxin] + H2O = (2E)-4-hydroxy-3-methylbut-2-enyl diphosphate + 2 reduced [2Fe-2S]-[ferredoxin] + 2 H(+). The enzyme catalyses dimethylallyl diphosphate + 2 oxidized [2Fe-2S]-[ferredoxin] + H2O = (2E)-4-hydroxy-3-methylbut-2-enyl diphosphate + 2 reduced [2Fe-2S]-[ferredoxin] + 2 H(+). The protein operates within isoprenoid biosynthesis; dimethylallyl diphosphate biosynthesis; dimethylallyl diphosphate from (2E)-4-hydroxy-3-methylbutenyl diphosphate: step 1/1. Its pathway is isoprenoid biosynthesis; isopentenyl diphosphate biosynthesis via DXP pathway; isopentenyl diphosphate from 1-deoxy-D-xylulose 5-phosphate: step 6/6. Catalyzes the conversion of 1-hydroxy-2-methyl-2-(E)-butenyl 4-diphosphate (HMBPP) into a mixture of isopentenyl diphosphate (IPP) and dimethylallyl diphosphate (DMAPP). Acts in the terminal step of the DOXP/MEP pathway for isoprenoid precursor biosynthesis. The protein is 4-hydroxy-3-methylbut-2-enyl diphosphate reductase of Vibrio vulnificus (strain CMCP6).